A 193-amino-acid polypeptide reads, in one-letter code: GDP-mannose pyrophosphatase (193 aa).

Residues 38–40, Arg-67, and 85–87 contribute to the GDP-alpha-D-mannose site; these read IRE and AGL. The Nudix hydrolase domain maps to 43–180; that stretch reads DRGDGATILL…RIKDGKTIML (138 aa). Residues Ala-85, Glu-100, and Glu-104 each coordinate Mg(2+). Residues 86-106 carry the Nudix box motif; that stretch reads GLLDDYSPEECIRNEAIEETG. GDP-alpha-D-mannose contacts are provided by residues Glu-104, Glu-127, 150–151, and Lys-176; that span reads DE. Glu-151 lines the Mg(2+) pocket.

It belongs to the Nudix hydrolase family. NudK subfamily. Homodimer. Mg(2+) is required as a cofactor.

It carries out the reaction GDP-alpha-D-mannose + H2O = alpha-D-mannose 1-phosphate + GMP + 2 H(+). Nucleoside diphosphate sugar hydrolase that hydrolyzes GDP-mannose as its preferred substrate, yielding GMP and mannose-1-phosphate. This is GDP-mannose pyrophosphatase (nudK) from Pectobacterium atrosepticum (strain SCRI 1043 / ATCC BAA-672) (Erwinia carotovora subsp. atroseptica).